A 439-amino-acid chain; its full sequence is Glutamyl-tRNA(Gln) amidotransferase subunit D (439 aa).

The Asparaginase/glutaminase domain occupies 88-419 (GKVKIISTGG…EEVKRIMLTN (332 aa)). Active-site residues include Thr98, Thr174, Asp175, and Lys253.

The protein belongs to the asparaginase 1 family. GatD subfamily. Heterodimer of GatD and GatE.

The catalysed reaction is L-glutamyl-tRNA(Gln) + L-glutamine + ATP + H2O = L-glutaminyl-tRNA(Gln) + L-glutamate + ADP + phosphate + H(+). Its function is as follows. Allows the formation of correctly charged Gln-tRNA(Gln) through the transamidation of misacylated Glu-tRNA(Gln) in organisms which lack glutaminyl-tRNA synthetase. The reaction takes place in the presence of glutamine and ATP through an activated gamma-phospho-Glu-tRNA(Gln). The GatDE system is specific for glutamate and does not act on aspartate. In Metallosphaera sedula (strain ATCC 51363 / DSM 5348 / JCM 9185 / NBRC 15509 / TH2), this protein is Glutamyl-tRNA(Gln) amidotransferase subunit D.